Here is a 105-residue protein sequence, read N- to C-terminus: Pyrimidine/purine nucleoside phosphorylase (105 aa).

Belongs to the nucleoside phosphorylase PpnP family.

The enzyme catalyses a purine D-ribonucleoside + phosphate = a purine nucleobase + alpha-D-ribose 1-phosphate. It carries out the reaction adenosine + phosphate = alpha-D-ribose 1-phosphate + adenine. The catalysed reaction is cytidine + phosphate = cytosine + alpha-D-ribose 1-phosphate. It catalyses the reaction guanosine + phosphate = alpha-D-ribose 1-phosphate + guanine. The enzyme catalyses inosine + phosphate = alpha-D-ribose 1-phosphate + hypoxanthine. It carries out the reaction thymidine + phosphate = 2-deoxy-alpha-D-ribose 1-phosphate + thymine. The catalysed reaction is uridine + phosphate = alpha-D-ribose 1-phosphate + uracil. It catalyses the reaction xanthosine + phosphate = alpha-D-ribose 1-phosphate + xanthine. In terms of biological role, catalyzes the phosphorolysis of diverse nucleosides, yielding D-ribose 1-phosphate and the respective free bases. Can use uridine, adenosine, guanosine, cytidine, thymidine, inosine and xanthosine as substrates. Also catalyzes the reverse reactions. The protein is Pyrimidine/purine nucleoside phosphorylase of Ralstonia nicotianae (strain ATCC BAA-1114 / GMI1000) (Ralstonia solanacearum).